Consider the following 275-residue polypeptide: Elongation factor Ts (275 aa).

The involved in Mg(2+) ion dislocation from EF-Tu stretch occupies residues 76-79; the sequence is TDFV.

This sequence belongs to the EF-Ts family.

The protein resides in the cytoplasm. Its function is as follows. Associates with the EF-Tu.GDP complex and induces the exchange of GDP to GTP. It remains bound to the aminoacyl-tRNA.EF-Tu.GTP complex up to the GTP hydrolysis stage on the ribosome. The chain is Elongation factor Ts from Corynebacterium diphtheriae (strain ATCC 700971 / NCTC 13129 / Biotype gravis).